Reading from the N-terminus, the 310-residue chain is MRIVFAGTPEFAAEHLKALLDSPYEIVAVYTQPDRPAGRGQKLMPSAVKALAVAHDIPVFQPQTLRNADAQAELAALKPDLMVVVAYGLILPQAVLDIPRLGCINSHASLLPRWRGAAPIQRAVEAGDAESGVTVMRMEAGLDTGPMLLKVVTPISADDTGGTLHDRLAEMGPPAVVQAIAGLADGSLQGEVQDDALATYAHKLNKDEARIDWSRPAVELERLIRAFNPWPVCHSTLDGESVKVLAANLSTGKGAPGEILSASKDGLVVACGDQALSLTRLQLPGGKALSFSDLFNSRREKFAAGKVLGQ.

109–112 (SLLP) is a (6S)-5,6,7,8-tetrahydrofolate binding site.

Belongs to the Fmt family.

The catalysed reaction is L-methionyl-tRNA(fMet) + (6R)-10-formyltetrahydrofolate = N-formyl-L-methionyl-tRNA(fMet) + (6S)-5,6,7,8-tetrahydrofolate + H(+). Its function is as follows. Attaches a formyl group to the free amino group of methionyl-tRNA(fMet). The formyl group appears to play a dual role in the initiator identity of N-formylmethionyl-tRNA by promoting its recognition by IF2 and preventing the misappropriation of this tRNA by the elongation apparatus. This Pseudomonas putida (strain GB-1) protein is Methionyl-tRNA formyltransferase.